Here is a 391-residue protein sequence, read N- to C-terminus: Elongation factor Tu (391 aa).

The 192-residue stretch at lysine 10–glutamate 201 folds into the tr-type G domain. The interval glycine 19 to threonine 26 is G1. GTP is bound at residue glycine 19–threonine 26. Residue threonine 26 participates in Mg(2+) binding. Residues glycine 55–serine 59 are G2. Residues aspartate 76 to glycine 79 form a G3 region. Residues aspartate 76–histidine 80 and asparagine 131–aspartate 134 contribute to the GTP site. Residues asparagine 131–aspartate 134 form a G4 region. A G5 region spans residues serine 169–leucine 171.

This sequence belongs to the TRAFAC class translation factor GTPase superfamily. Classic translation factor GTPase family. EF-Tu/EF-1A subfamily. Monomer.

The protein resides in the cytoplasm. It carries out the reaction GTP + H2O = GDP + phosphate + H(+). In terms of biological role, GTP hydrolase that promotes the GTP-dependent binding of aminoacyl-tRNA to the A-site of ribosomes during protein biosynthesis. This chain is Elongation factor Tu, found in Rhizobium meliloti (strain 1021) (Ensifer meliloti).